A 504-amino-acid polypeptide reads, in one-letter code: Potassium voltage-gated channel subfamily V member 1 (504 aa).

Disordered stretches follow at residues 1–22 (MDLS…GGSL) and 172–193 (KKDT…QGPC). The Cytoplasmic segment spans residues 1–214 (MDLSPRNRPL…EKPGSSTAAR (214 aa)). Residues 10–22 (LLESSSLDSGGSL) show a composition bias toward low complexity. Positions 172-185 (KKDTDDQESQHESE) are enriched in basic and acidic residues. A helical membrane pass occupies residues 215-235 (IFGVISIIFVAVSIVNMALMS). Residues 236–242 (AELSWLN) are Extracellular-facing. Residues 243-263 (LQLLEILEYVCISWFTGEFIL) form a helical membrane-spanning segment. Topologically, residues 264-280 (RFLCVKDRCRFLRKVPN) are cytoplasmic. Residues 281 to 301 (IIDLLAILPFYITLLVESLSG) traverse the membrane as a helical segment. Topologically, residues 302–313 (SHTTQELENVGR) are extracellular. Residues 314–335 (LVQVLRLLRALRMLKLGRHSTG) traverse the membrane as a helical; Voltage-sensor segment. The Cytoplasmic segment spans residues 336 to 349 (LRSLGMTITQCYEE). Residues 350–370 (VGLLLLFLSVGISIFSTIEYF) traverse the membrane as a helical segment. Positions 396–401 (TVGYGD) match the Selectivity filter motif. The helical transmembrane segment at 411 to 431 (IVAFMCILSGILVLALPIAII) threads the bilayer. Topologically, residues 432–504 (NDRFSACYFT…RSSGGDDFWF (73 aa)) are cytoplasmic.

It belongs to the potassium channel family. V (TC 1.A.1.2) subfamily. Kv8.1/KCNV1 sub-subfamily. As to quaternary structure, heteromultimer with KCNB1 and KCNB2. Interacts with KCNC4 and KCND1. Detected in brain, throughout layers II, IV and VI of the brain cortex. Detected in cerebellum and hippocampus, in the granule cell layer, Purkinje cell layer, pyramidal cell layer and dentate gyrus. Detected at lower levels in olfactory bulb, amygdala, thalamus, hypothalamus, midbrain and brainstem.

The protein resides in the cell membrane. In terms of biological role, potassium channel subunit that does not form functional channels by itself. Modulates KCNB1 and KCNB2 channel activity by shifting the threshold for inactivation to more negative values and by slowing the rate of inactivation. Can down-regulate the channel activity of KCNB1, KCNB2, KCNC4 and KCND1, possibly by trapping them in intracellular membranes. The sequence is that of Potassium voltage-gated channel subfamily V member 1 (KCNV1) from Mesocricetus auratus (Golden hamster).